The primary structure comprises 217 residues: Eukaryotic translation initiation factor 4E (217 aa).

The segment covering 1–11 has biased composition (low complexity); that stretch reads MATVEPETTPT. Residues 1–27 form a disordered region; that stretch reads MATVEPETTPTTNPPPAEEEKTESNQE. Ala-2 is modified (N-acetylalanine). The residue at position 22 (Thr-22) is a Phosphothreonine. The tract at residues 37–40 is EIF4EBP1/2/3 binding; the sequence is HPLQ. 56 to 57 contributes to the mRNA binding site; sequence WQ. Positions 73 to 77 are EIF4EBP1/2/3 binding; sequence WALYN. 102–103 lines the mRNA pocket; it reads WE. The segment at 132-139 is EIF4EBP1/2/3 binding; that stretch reads ETLLCLIG. MRNA-binding positions include 157-162 and 205-207; these read RAKGDK and TKS. A Phosphoserine; by PKC and MKNK2 modification is found at Ser-209.

Belongs to the eukaryotic initiation factor 4E family. As to quaternary structure, eIF4F is a multi-subunit complex, the composition of which varies with external and internal environmental conditions. It is composed of at least EIF4A, EIF4E and EIF4G1/EIF4G3. EIF4E is also known to interact with other partners. Interacts with EIF4ENIF1/4E-T; promotes recruitment to P-bodies and import into the nucleus. Hypophosphorylated EIF4EBP1, EIF4EBP2 and EIF4EBP3 compete with EIF4G1/EIF4G3 to interact with EIF4E; insulin stimulated MAP-kinase (MAPK1 and MAPK3) phosphorylation of EIF4EBP1 causes dissociation of the complex allowing EIF4G1/EIF4G3 to bind and consequent initiation of translation. Interacts mutually exclusive with EIF4A1 or EIF4A2. Interacts with NGDN and PIWIL2. Component of the CYFIP1-EIF4E-FMR1 complex composed of CYFIP, EIF4E and FMR1. Interacts directly with CYFIP1. Interacts with CLOCK. Binds to MKNK2 in nucleus. Interacts with LIMD1, WTIP and AJUBA. Interacts with APOBEC3G in an RNA-dependent manner. Interacts with LARP1. Interacts with METTL3. Interacts with RBM24; this interaction prevents EIF4E from binding to p53/TP53 mRNA and inhibits the assembly of translation initiation complex. Interacts with DDX3X; interaction is direct and in an RNA-independent manner; this interaction enhances EIF4E cap-binding ability and is required for the repression of cap-dependent translation and the increase of IRES-mediated translation. DDX3X competes with EIF4G1 for interaction with EIF4E. Interacts with EIF4G1; which in a mutual exclusive interaction associates either with EIF1 or with EIF4E on a common binding site. Interacts with BTG4 and CNOT7. Interacts with LRPPRC (via N-terminus); the interaction promotes association of EIF4E with 4ESE-containing mRNAs. Interacts with mRNA cleavage enzyme CPSF3 and its cofactor CPSF1. Interacts (via RING-type zinc finger) with PML; the interaction results in conformational changes of both interacting proteins and reduces EIF4E affinity for the 5' m7G cap of mRNA, thus reducing EIF4E-mediated mRNA nuclear export. Interacts with homeobox protein HHEX/PRH; the interaction inhibits EIF4E-mediated mRNA nuclear export. Interacts with homeobox protein HOXA9; the interaction positively regulates EIF4E-mediated mRNA nuclear export. Interacts with homeobox protein EMX2. In terms of assembly, (Microbial infection) Interacts with murine norovirus viral genome-linked protein; this interaction plays a role in translation of viral proteins. In terms of processing, phosphorylation increases the ability of the protein to bind to mRNA caps and to form the eIF4F complex. Phosphorylation also enhances its mRNA transport function. Phosphorylation at Ser-209 is not essential for protein synthesis.

It localises to the cytoplasm. The protein resides in the P-body. It is found in the stress granule. Its subcellular location is the nucleus. The protein localises to the nucleus speckle. It localises to the nuclear body. Its function is as follows. Acts in the cytoplasm to initiate and regulate protein synthesis and is required in the nucleus for export of a subset of mRNAs from the nucleus to the cytoplasm which promotes processes such as RNA capping, processing and splicing. Component of the protein complex eIF4F, which is involved in the recognition of the mRNA cap, ATP-dependent unwinding of 5'-terminal secondary structure and recruitment of mRNA to the ribosome. This protein recognizes and binds the 7-methylguanosine (m7G)-containing mRNA cap during an early step in the initiation of protein synthesis and facilitates ribosome binding by inducing the unwinding of the mRNAs secondary structures. Together with EIF4G1, antagonizes the scanning promoted by EIF1-EIF4G1 and is required for TISU translation, a process where the TISU element recognition makes scanning unnecessary. In addition to its role in translation initiation, also acts as a regulator of translation and stability in the cytoplasm. Component of the CYFIP1-EIF4E-FMR1 complex which binds to the mRNA cap and mediates translational repression: in the complex, EIF4E mediates the binding to the mRNA cap. Component of a multiprotein complex that sequesters and represses translation of proneurogenic factors during neurogenesis. In P-bodies, component of a complex that mediates the storage of translationally inactive mRNAs in the cytoplasm and prevents their degradation. May play an important role in spermatogenesis through translational regulation of stage-specific mRNAs during germ cell development. As well as its roles in translation, also involved in mRNA nucleocytoplasmic transport. Its role in mRNA export from the nucleus to the cytoplasm relies on its ability to bind the m7G cap of RNAs and on the presence of the 50-nucleotide EIF4E sensitivity element (4ESE) in the 3'UTR of sensitive transcripts. Interaction with the 4ESE is mediated by LRPPRC which binds simultaneously to both EIF4E and the 4ESE, thereby acting as a platform for assembly for the RNA export complex. EIF4E-dependent mRNA export is independent of ongoing protein or RNA synthesis and is also NFX1-independent but is XPO1-dependent with LRPPRC interacting with XPO1 to form an EIF4E-dependent mRNA export complex. Alters the composition of the cytoplasmic face of the nuclear pore to promote RNA export by reducing RANBP2 expression, relocalizing nucleoporin NUP214 and increasing expression of RANBP1 and RNA export factors DDX19 and GLE1. Promotes the nuclear export of cyclin CCND1 mRNA. Promotes the nuclear export of NOS2/iNOS mRNA. Promotes the nuclear export of MDM2 mRNA. Also promotes the export of additional mRNAs, including others involved in the cell cycle. In the nucleus, binds to capped splice factor-encoding mRNAs and stimulates their nuclear export to enhance splice factor production by increasing their cytoplasmic availability to the translation machinery. May also regulate splicing through interaction with the spliceosome in an RNA and m7G cap-dependent manner. Also binds to some pre-mRNAs and may play a role in their recruitment to the spliceosome. Promotes steady-state capping of a subset of coding and non-coding RNAs by mediating nuclear export of capping machinery mRNAs including RNMT, RNGTT and RAMAC to enhance their translation. Stimulates mRNA 3'-end processing by promoting the expression of several core cleavage complex factors required for mRNA cleavage and polyadenylation, and may also have a direct effect through its interaction with the CPSF3 cleavage enzyme. Rescues cells from apoptosis by promoting activation of serine/threonine-protein kinase AKT1 through mRNA export of NBS1 which potentiates AKT1 phosphorylation and also through mRNA export of AKT1 effectors, allowing for increased production of these proteins. This Mus musculus (Mouse) protein is Eukaryotic translation initiation factor 4E.